The following is a 608-amino-acid chain: Threonine--tRNA ligase (608 aa).

The segment at 1–144 is editing domain; sequence MRILLIHSDY…SRTITAEEEE (144 aa). The interval 195 to 489 is catalytic; that stretch reads PHVKLMREKE…ELDEKAPMLP (295 aa). Cys-286, His-338, and His-459 together coordinate Zn(2+).

Belongs to the class-II aminoacyl-tRNA synthetase family. Homodimer. It depends on Zn(2+) as a cofactor.

The protein localises to the cytoplasm. The enzyme catalyses tRNA(Thr) + L-threonine + ATP = L-threonyl-tRNA(Thr) + AMP + diphosphate + H(+). Catalyzes the attachment of threonine to tRNA(Thr) in a two-step reaction: L-threonine is first activated by ATP to form Thr-AMP and then transferred to the acceptor end of tRNA(Thr). Also edits incorrectly charged L-seryl-tRNA(Thr). The protein is Threonine--tRNA ligase of Methanobrevibacter smithii (strain ATCC 35061 / DSM 861 / OCM 144 / PS).